The primary structure comprises 264 residues: 3-methyl-2-oxobutanoate hydroxymethyltransferase (264 aa).

Mg(2+) contacts are provided by Asp-45 and Asp-84. 3-methyl-2-oxobutanoate is bound by residues Asp-45–Ser-46, Asp-84, and Lys-112. Glu-114 contacts Mg(2+). Glu-181 (proton acceptor) is an active-site residue.

The protein belongs to the PanB family. Homodecamer; pentamer of dimers. It depends on Mg(2+) as a cofactor.

The protein resides in the cytoplasm. It catalyses the reaction 3-methyl-2-oxobutanoate + (6R)-5,10-methylene-5,6,7,8-tetrahydrofolate + H2O = 2-dehydropantoate + (6S)-5,6,7,8-tetrahydrofolate. It participates in cofactor biosynthesis; (R)-pantothenate biosynthesis; (R)-pantoate from 3-methyl-2-oxobutanoate: step 1/2. Functionally, catalyzes the reversible reaction in which hydroxymethyl group from 5,10-methylenetetrahydrofolate is transferred onto alpha-ketoisovalerate to form ketopantoate. This chain is 3-methyl-2-oxobutanoate hydroxymethyltransferase, found in Tolumonas auensis (strain DSM 9187 / NBRC 110442 / TA 4).